Consider the following 467-residue polypeptide: Histone acetyltransferase type B catalytic subunit (467 aa).

A disordered region spans residues 1–24 (MVQKQQASAGPGTEPKKRRRVGFS). Residues 249–251 (ILV) and 256–262 (QGKGLGS) each bind acetyl-CoA. Residue glutamate 283 is the Proton donor/acceptor of the active site.

This sequence belongs to the HAT1 family.

It is found in the nucleus. Its subcellular location is the cytoplasm. It carries out the reaction L-lysyl-[protein] + acetyl-CoA = N(6)-acetyl-L-lysyl-[protein] + CoA + H(+). Functionally, acetylates soluble but not nucleosomal H4. Acetylates 'Lys-12' of histone H4. This is Histone acetyltransferase type B catalytic subunit (HAG2) from Arabidopsis thaliana (Mouse-ear cress).